Reading from the N-terminus, the 128-residue chain is Protein 2B* (128 aa).

Disordered stretches follow at residues Pro1–Ala27 and Arg92–Ser128. The span at Ser18 to Ala27 shows a compositional bias: polar residues. The span at Ile111–Ser128 shows a compositional bias: basic and acidic residues.

This sequence belongs to the encephalomyocarditis virus protein 2B* family.

This chain is Protein 2B*, found in Aotus trivirgatus (Three-striped night monkey).